Consider the following 190-residue polypeptide: Protein GrpE (190 aa).

The tract at residues 1–33 is disordered; that stretch reads MSEQEKDQNNAEPQVETVEEQQAAAAAEAVEPT. Low complexity predominate over residues 11-32; that stretch reads AEPQVETVEEQQAAAAAEAVEP.

The protein belongs to the GrpE family. As to quaternary structure, homodimer.

The protein resides in the cytoplasm. Its function is as follows. Participates actively in the response to hyperosmotic and heat shock by preventing the aggregation of stress-denatured proteins, in association with DnaK and GrpE. It is the nucleotide exchange factor for DnaK and may function as a thermosensor. Unfolded proteins bind initially to DnaJ; upon interaction with the DnaJ-bound protein, DnaK hydrolyzes its bound ATP, resulting in the formation of a stable complex. GrpE releases ADP from DnaK; ATP binding to DnaK triggers the release of the substrate protein, thus completing the reaction cycle. Several rounds of ATP-dependent interactions between DnaJ, DnaK and GrpE are required for fully efficient folding. The chain is Protein GrpE from Alcanivorax borkumensis (strain ATCC 700651 / DSM 11573 / NCIMB 13689 / SK2).